Consider the following 239-residue polypeptide: Sugar fermentation stimulation protein homolog (239 aa).

It belongs to the SfsA family.

This is Sugar fermentation stimulation protein homolog from Synechococcus sp. (strain JA-2-3B'a(2-13)) (Cyanobacteria bacterium Yellowstone B-Prime).